The sequence spans 323 residues: Beta-ketoacyl-[acyl-carrier-protein] synthase III (323 aa).

Active-site residues include C112 and H250. The tract at residues 251 to 255 (QANYR) is ACP-binding. N280 is an active-site residue.

This sequence belongs to the thiolase-like superfamily. FabH family. As to quaternary structure, homodimer.

It localises to the cytoplasm. The catalysed reaction is malonyl-[ACP] + acetyl-CoA + H(+) = 3-oxobutanoyl-[ACP] + CO2 + CoA. The protein operates within lipid metabolism; fatty acid biosynthesis. Its function is as follows. Catalyzes the condensation reaction of fatty acid synthesis by the addition to an acyl acceptor of two carbons from malonyl-ACP. Catalyzes the first condensation reaction which initiates fatty acid synthesis and may therefore play a role in governing the total rate of fatty acid production. Possesses both acetoacetyl-ACP synthase and acetyl transacylase activities. Its substrate specificity determines the biosynthesis of branched-chain and/or straight-chain of fatty acids. This chain is Beta-ketoacyl-[acyl-carrier-protein] synthase III, found in Clostridium beijerinckii (strain ATCC 51743 / NCIMB 8052) (Clostridium acetobutylicum).